The sequence spans 458 residues: ATP-dependent protease ATPase subunit HslU (458 aa).

Residues V18, 60 to 65 (GVGKTE), D270, E335, and R407 contribute to the ATP site.

Belongs to the ClpX chaperone family. HslU subfamily. In terms of assembly, a double ring-shaped homohexamer of HslV is capped on each side by a ring-shaped HslU homohexamer. The assembly of the HslU/HslV complex is dependent on binding of ATP.

Its subcellular location is the cytoplasm. Functionally, ATPase subunit of a proteasome-like degradation complex; this subunit has chaperone activity. The binding of ATP and its subsequent hydrolysis by HslU are essential for unfolding of protein substrates subsequently hydrolyzed by HslV. HslU recognizes the N-terminal part of its protein substrates and unfolds these before they are guided to HslV for hydrolysis. This is ATP-dependent protease ATPase subunit HslU from Desulfitobacterium hafniense (strain DSM 10664 / DCB-2).